The sequence spans 86 residues: Cerebrin prohormone (86 aa).

Residues 1 to 27 form the signal peptide; the sequence is MFGYRSLLVLLVTLSLCLLLQSSHCSA. A propeptide spanning residues 28-64 is cleaved from the precursor; sequence VRTYGNDLDARARREIISLAARLIKLSMYGPEDDSFV. Ile83 carries the post-translational modification Isoleucine amide.

In terms of tissue distribution, expressed only in cerebral ganglion.

The protein resides in the secreted. In terms of biological role, may function as a hormone and may play a neuromodulatory role. In Aplysia californica (California sea hare), this protein is Cerebrin prohormone (CBPH).